Here is a 200-residue protein sequence, read N- to C-terminus: Cuticle protein 21.3 (200 aa).

A run of 10 repeats spans residues 98-101 (AAPA), 104-107 (AAPA), 116-119 (AAPA), 121-124 (AAPA), 133-136 (AAPA), 154-157 (AAPA), 166-169 (AAPA), 178-181 (AAPA), 184-187 (AAPA), and 196-199 (AAPA).

Its function is as follows. Component of the cuticle of migratory locust which contains more than 100 different structural proteins. The chain is Cuticle protein 21.3 from Locusta migratoria (Migratory locust).